A 272-amino-acid polypeptide reads, in one-letter code: Phosphoglycolate phosphatase (272 aa).

Asp-19 (nucleophile) is an active-site residue. Asp-19, Asp-21, and Asp-182 together coordinate Mg(2+).

This sequence belongs to the HAD-like hydrolase superfamily. CbbY/CbbZ/Gph/YieH family. Requires Mg(2+) as cofactor.

The catalysed reaction is 2-phosphoglycolate + H2O = glycolate + phosphate. The protein operates within organic acid metabolism; glycolate biosynthesis; glycolate from 2-phosphoglycolate: step 1/1. Functionally, specifically catalyzes the dephosphorylation of 2-phosphoglycolate. Is involved in the dissimilation of the intracellular 2-phosphoglycolate formed during the DNA repair of 3'-phosphoglycolate ends, a major class of DNA lesions induced by oxidative stress. The protein is Phosphoglycolate phosphatase of Pseudomonas fluorescens (strain ATCC BAA-477 / NRRL B-23932 / Pf-5).